The sequence spans 877 residues: Alanine--tRNA ligase (877 aa).

Zn(2+) contacts are provided by histidine 567, histidine 571, cysteine 669, and histidine 673.

This sequence belongs to the class-II aminoacyl-tRNA synthetase family. Zn(2+) serves as cofactor.

It localises to the cytoplasm. It carries out the reaction tRNA(Ala) + L-alanine + ATP = L-alanyl-tRNA(Ala) + AMP + diphosphate. In terms of biological role, catalyzes the attachment of alanine to tRNA(Ala) in a two-step reaction: alanine is first activated by ATP to form Ala-AMP and then transferred to the acceptor end of tRNA(Ala). Also edits incorrectly charged Ser-tRNA(Ala) and Gly-tRNA(Ala) via its editing domain. This chain is Alanine--tRNA ligase, found in Rickettsia prowazekii (strain Madrid E).